The chain runs to 98 residues: Protein S100-A13 (98 aa).

The EF-hand domain occupies 18-53 (STFFTFAGREGRKGSLNINEFKELATQQLPHLLKDV). Positions 32, 37, 64, 66, 68, 70, and 75 each coordinate Ca(2+). Serine 32 is modified (phosphoserine).

Belongs to the S-100 family. Homodimer. Part of a copper-dependent multiprotein complex containing S100A13, FGF1 and SYT1. Interacts with FGF1 and SYT1. Interacts with IL1A.

Its subcellular location is the cytoplasm. It is found in the secreted. Plays a role in the export of proteins that lack a signal peptide and are secreted by an alternative pathway. Binds two calcium ions per subunit. Binds one copper ion. Binding of one copper ion does not interfere with calcium binding. Required for the copper-dependent stress-induced export of IL1A and FGF1. The calcium-free protein binds to lipid vesicles containing phosphatidylserine, but not to vesicles containing phosphatidylcholine. This chain is Protein S100-A13 (S100a13), found in Mus musculus (Mouse).